We begin with the raw amino-acid sequence, 148 residues long: Snaclec 8 (148 aa).

An N-terminal signal peptide occupies residues 1–23 (MGRFIFVSFSLLVVFFSLSGTEA). In terms of domain architecture, C-type lectin spans 34–148 (YDQNCYKAFE…DTQFRLQEPG (115 aa)).

It belongs to the snaclec family. As to quaternary structure, heterodimer; disulfide-linked. In terms of processing, contains disulfide bonds. Expressed by the venom gland.

Its subcellular location is the secreted. Its function is as follows. Interferes with one step of hemostasis (modulation of platelet aggregation, or coagulation cascade, for example). This is Snaclec 8 from Echis carinatus sochureki (Saw-scaled viper).